A 241-amino-acid chain; its full sequence is Uracil-DNA glycosylase (241 aa).

The active-site Proton acceptor is the Asp71. The disordered stretch occupies residues 221 to 241; it reads ISPIDWSLPPRNELDTTSAGA.

It belongs to the uracil-DNA glycosylase (UDG) superfamily. UNG family.

It localises to the cytoplasm. The enzyme catalyses Hydrolyzes single-stranded DNA or mismatched double-stranded DNA and polynucleotides, releasing free uracil.. Functionally, excises uracil residues from the DNA which can arise as a result of misincorporation of dUMP residues by DNA polymerase or due to deamination of cytosine. In Xanthomonas oryzae pv. oryzae (strain MAFF 311018), this protein is Uracil-DNA glycosylase.